A 223-amino-acid polypeptide reads, in one-letter code: Octanoyltransferase (223 aa).

One can recognise a BPL/LPL catalytic domain in the interval 31 to 216; it reads GQIGDTLLLL…QIGEVFALEP (186 aa). Substrate is bound by residues 76–83, 145–147, and 159–161; these read RGGEVTYH, AIG, and GLA. The Acyl-thioester intermediate role is filled by Cys-177.

Belongs to the LipB family.

It localises to the cytoplasm. The catalysed reaction is octanoyl-[ACP] + L-lysyl-[protein] = N(6)-octanoyl-L-lysyl-[protein] + holo-[ACP] + H(+). It participates in protein modification; protein lipoylation via endogenous pathway; protein N(6)-(lipoyl)lysine from octanoyl-[acyl-carrier-protein]: step 1/2. Its function is as follows. Catalyzes the transfer of endogenously produced octanoic acid from octanoyl-acyl-carrier-protein onto the lipoyl domains of lipoate-dependent enzymes. Lipoyl-ACP can also act as a substrate although octanoyl-ACP is likely to be the physiological substrate. This Chloroflexus aurantiacus (strain ATCC 29366 / DSM 635 / J-10-fl) protein is Octanoyltransferase.